We begin with the raw amino-acid sequence, 453 residues long: uncharacterized protein (453 aa).

Disordered regions lie at residues 183 to 210 (GNGR…RSLS) and 428 to 453 (PDSM…QYSK). The segment covering 198-207 (TKAHNYKTRR) has biased composition (basic residues). Over residues 433 to 453 (HPPTFSKNNTSSNPKSHQYSK) the composition is skewed to polar residues.

This is an uncharacterized protein from Saccharomyces cerevisiae (strain ATCC 204508 / S288c) (Baker's yeast).